The sequence spans 354 residues: Petrobactin import system permease protein FatC (354 aa).

A run of 9 helical transmembrane segments spans residues 37–57 (YWIVLITLIALGLLSSYGLLV), 77–97 (IVAIVAMIIAAVCHSLSTVAF), 116–136 (LYSAIQTSTVFFFGASALINF), 141–161 (SFLFQVVVMVFMSLILYGWLL), 168–188 (LQLMLLVGIIIGTGLNSVSTF), 214–234 (PAYFPIVIPMIIIVAVLIFAH), 259–279 (VIYTLVLVAILMSISTALIGP), 302–322 (YIFPMAFAIGFLIMTSAYFLM), and 329–349 (QGVVSVIIELFGGIIFLTIVL).

It belongs to the binding-protein-dependent transport system permease family. FecCD subfamily. As to quaternary structure, the complex is composed of two ATP-binding proteins (FatE), two transmembrane proteins (FatC and FatD) and a solute-binding protein (FpuA).

Its subcellular location is the cell membrane. Its function is as follows. Part of an ABC transporter complex involved in ferric-petrobactin uptake. Probably responsible for the translocation of the substrate across the membrane. This is Petrobactin import system permease protein FatC from Bacillus anthracis.